We begin with the raw amino-acid sequence, 1380 residues long: DNA-directed RNA polymerase subunit beta (1380 aa).

The protein belongs to the RNA polymerase beta chain family. As to quaternary structure, the RNAP catalytic core consists of 2 alpha, 1 beta, 1 beta' and 1 omega subunit. When a sigma factor is associated with the core the holoenzyme is formed, which can initiate transcription.

It catalyses the reaction RNA(n) + a ribonucleoside 5'-triphosphate = RNA(n+1) + diphosphate. DNA-dependent RNA polymerase catalyzes the transcription of DNA into RNA using the four ribonucleoside triphosphates as substrates. In Rhizobium meliloti (strain 1021) (Ensifer meliloti), this protein is DNA-directed RNA polymerase subunit beta.